The sequence spans 68 residues: Copper transport protein ATOX1 (68 aa).

The 63-residue stretch at 1–63 folds into the HMA domain; sequence MPKHEFSVDM…TLNKTGKAVS (63 aa). Cu cation-binding residues include Cys12 and Cys15. Ser47 bears the Phosphoserine mark. N6-acetyllysine is present on Lys60.

This sequence belongs to the ATX1 family. In terms of assembly, homodimer. Interacts with ATP7B. Interacts with ATP7A. Interacts (via dimer form) with SLC31A1 (via C-terminal domain); this interaction improves ATOX1 stability and controls intracellular Cu(I) levels.

Functionally, binds and deliver cytosolic copper to the copper ATPase proteins. May be important in cellular antioxidant defense. The sequence is that of Copper transport protein ATOX1 from Mus musculus (Mouse).